The sequence spans 149 residues: Ribonuclease H (149 aa).

Residues 4–145 (QRGVVEAFTD…ADALANQGID (142 aa)) enclose the RNase H type-1 domain. The Mg(2+) site is built by Asp-13, Glu-51, Asp-73, and Asp-137.

The protein belongs to the RNase H family. As to quaternary structure, monomer. Requires Mg(2+) as cofactor.

The protein resides in the cytoplasm. It catalyses the reaction Endonucleolytic cleavage to 5'-phosphomonoester.. Functionally, endonuclease that specifically degrades the RNA of RNA-DNA hybrids. In Halorhodospira halophila (strain DSM 244 / SL1) (Ectothiorhodospira halophila (strain DSM 244 / SL1)), this protein is Ribonuclease H.